A 394-amino-acid polypeptide reads, in one-letter code: Exodeoxyribonuclease 7 large subunit (394 aa).

The protein belongs to the XseA family. As to quaternary structure, heterooligomer composed of large and small subunits.

The protein localises to the cytoplasm. It carries out the reaction Exonucleolytic cleavage in either 5'- to 3'- or 3'- to 5'-direction to yield nucleoside 5'-phosphates.. Its function is as follows. Bidirectionally degrades single-stranded DNA into large acid-insoluble oligonucleotides, which are then degraded further into small acid-soluble oligonucleotides. This is Exodeoxyribonuclease 7 large subunit from Thermotoga maritima (strain ATCC 43589 / DSM 3109 / JCM 10099 / NBRC 100826 / MSB8).